A 174-amino-acid chain; its full sequence is Co-chaperone protein HscB homolog (174 aa).

The region spanning 2 to 74 (NYFELFKFSP…IRRAEHLLSL (73 aa)) is the J domain.

This sequence belongs to the HscB family. Interacts with HscA and stimulates its ATPase activity.

Functionally, co-chaperone involved in the maturation of iron-sulfur cluster-containing proteins. Seems to help targeting proteins to be folded toward HscA. The chain is Co-chaperone protein HscB homolog from Shewanella sp. (strain W3-18-1).